The primary structure comprises 195 residues: Imidazoleglycerol-phosphate dehydratase (195 aa).

It belongs to the imidazoleglycerol-phosphate dehydratase family.

It is found in the cytoplasm. The catalysed reaction is D-erythro-1-(imidazol-4-yl)glycerol 3-phosphate = 3-(imidazol-4-yl)-2-oxopropyl phosphate + H2O. The protein operates within amino-acid biosynthesis; L-histidine biosynthesis; L-histidine from 5-phospho-alpha-D-ribose 1-diphosphate: step 6/9. The polypeptide is Imidazoleglycerol-phosphate dehydratase (Maridesulfovibrio salexigens (strain ATCC 14822 / DSM 2638 / NCIMB 8403 / VKM B-1763) (Desulfovibrio salexigens)).